We begin with the raw amino-acid sequence, 281 residues long: Short neuropeptide F (281 aa).

A signal peptide spans 1–30 (MFHLKRELSQGCALALICLVSLQMQQPAQA). A propeptide spanning residues 31–64 (EVSSAQGTPLSNLYDNLLQREYAGPVVFPNHQVE) is cleaved from the precursor. Phenylalanine amide is present on residues F77 and F111. The propeptide occupies 115 to 165 (DPSLPQMRRTAYDDLLERELTLNSQQQQQQLGTEPDSDLGADYDGLYERVV). Residues 137 to 156 (NSQQQQQQLGTEPDSDLGAD) form a disordered region. The residue at position 173 (W173) is a Tryptophan amide. Positions 176–246 (SVPQFEANNA…NDTSEFQREV (71 aa)) are excised as a propeptide. Positions 226-281 (ANDEDTDTDLNNDTSEFQREVRKPMRLRWGRSTGKAPSEQKHTPEETSSIPPKTQN) are disordered. W254 is modified (tryptophan amide). Positions 257 to 281 (STGKAPSEQKHTPEETSSIPPKTQN) are excised as a propeptide. The span at 271–281 (ETSSIPPKTQN) shows a compositional bias: polar residues.

This sequence belongs to the NPY family. In terms of tissue distribution, stage 17 embryos show expression in the two brain hemispheres (neural cells located in the dorsal posterior region), the connected ventral ganglion (pairs of neural cells along the ventral midline) and the peripheral nervous system (expressed in the antennal-maxillary sensory cells). In the brain hemispheres of the feeding third instar larva, expression in neural cells is located in the dorsal-anterior region of the protocerebrum. In the larval ventral ganglion, expression is seen in the neural cells located in the subesophagial region, along the ventral midline and in thoracic and abdominal segments. In the adult brain, expression is seen in the medulla and the mushroom body calyx (at protein level).

The protein resides in the secreted. Functionally, plays a role in controlling food intake and regulating body size. The polypeptide is Short neuropeptide F (sNPF) (Drosophila melanogaster (Fruit fly)).